A 95-amino-acid chain; its full sequence is Integration host factor subunit beta (95 aa).

The protein belongs to the bacterial histone-like protein family. As to quaternary structure, heterodimer of an alpha and a beta chain.

This protein is one of the two subunits of integration host factor, a specific DNA-binding protein that functions in genetic recombination as well as in transcriptional and translational control. The protein is Integration host factor subunit beta of Jannaschia sp. (strain CCS1).